The sequence spans 130 residues: Ribosome-binding factor A (130 aa).

Belongs to the RbfA family. Monomer. Binds 30S ribosomal subunits, but not 50S ribosomal subunits or 70S ribosomes.

Its subcellular location is the cytoplasm. One of several proteins that assist in the late maturation steps of the functional core of the 30S ribosomal subunit. Associates with free 30S ribosomal subunits (but not with 30S subunits that are part of 70S ribosomes or polysomes). Required for efficient processing of 16S rRNA. May interact with the 5'-terminal helix region of 16S rRNA. The sequence is that of Ribosome-binding factor A from Alkalilimnicola ehrlichii (strain ATCC BAA-1101 / DSM 17681 / MLHE-1).